Here is a 170-residue protein sequence, read N- to C-terminus: ATP synthase subunit b (170 aa).

Residues 15–37 (GDILFQLLAMLILLALLKKYALG) traverse the membrane as a helical segment.

This sequence belongs to the ATPase B chain family. As to quaternary structure, F-type ATPases have 2 components, F(1) - the catalytic core - and F(0) - the membrane proton channel. F(1) has five subunits: alpha(3), beta(3), gamma(1), delta(1), epsilon(1). F(0) has three main subunits: a(1), b(2) and c(10-14). The alpha and beta chains form an alternating ring which encloses part of the gamma chain. F(1) is attached to F(0) by a central stalk formed by the gamma and epsilon chains, while a peripheral stalk is formed by the delta and b chains. The F(1)F(0) complex interacts with SpoIIIJ and YqjG; YqgA is found in the same complex.

It is found in the cell membrane. F(1)F(0) ATP synthase produces ATP from ADP in the presence of a proton or sodium gradient. F-type ATPases consist of two structural domains, F(1) containing the extramembraneous catalytic core and F(0) containing the membrane proton channel, linked together by a central stalk and a peripheral stalk. During catalysis, ATP synthesis in the catalytic domain of F(1) is coupled via a rotary mechanism of the central stalk subunits to proton translocation. In terms of biological role, component of the F(0) channel, it forms part of the peripheral stalk, linking F(1) to F(0). This is ATP synthase subunit b from Bacillus subtilis (strain 168).